The primary structure comprises 305 residues: PI-PLC X domain-containing protein 2 (305 aa).

The region spanning H42–C215 is the PI-PLC X-box domain. Active-site residues include H57 and H132.

Widely expressed.

The protein localises to the nucleus. The enzyme catalyses a 1,2-diacyl-sn-glycero-3-phospho-(1D-myo-inositol) + H2O = 1D-myo-inositol 1-phosphate + a 1,2-diacyl-sn-glycerol + H(+). Catalyzes the hydrolysis of inositol from phosphatidylinositol (1,2-diacyl-sn-glycero-3-phospho-(1D-myo-inositol), PI). Could also hydrolyze various multi-phosphorylated derivatives of PI, such as phosphatidylinositol-4,5 bisphosphate (PIP2), releasing inositol-1,4,5-trisphosphate (IP3) and the protein kinase C activator diacylglycerol (DAG), therefore mediating cell signaling. This is PI-PLC X domain-containing protein 2 (PLCXD2) from Homo sapiens (Human).